Reading from the N-terminus, the 142-residue chain is Transcriptional regulator MraZ (142 aa).

2 consecutive SpoVT-AbrB domains span residues 5 to 47 and 76 to 119; these read EFQH…PQHE and ATEC…SKEE.

The protein belongs to the MraZ family. Forms oligomers.

The protein resides in the cytoplasm. It localises to the nucleoid. The chain is Transcriptional regulator MraZ from Desulforamulus reducens (strain ATCC BAA-1160 / DSM 100696 / MI-1) (Desulfotomaculum reducens).